We begin with the raw amino-acid sequence, 182 residues long: Endoribonuclease YbeY (182 aa).

Residues histidine 120, histidine 124, and histidine 130 each contribute to the Zn(2+) site. Residues 157 to 182 (RGVSFAPKPTGAGAFPSAADRDDTQN) form a disordered region.

Belongs to the endoribonuclease YbeY family. Zn(2+) is required as a cofactor.

It localises to the cytoplasm. Functionally, single strand-specific metallo-endoribonuclease involved in late-stage 70S ribosome quality control and in maturation of the 3' terminus of the 16S rRNA. The protein is Endoribonuclease YbeY of Corynebacterium jeikeium (strain K411).